The chain runs to 346 residues: Holliday junction branch migration complex subunit RuvB (346 aa).

Residues 1–182 (MTRVISGEPQ…FGIPIRLEFY (182 aa)) are large ATPase domain (RuvB-L). Residues leucine 21, arginine 22, glycine 63, lysine 66, threonine 67, threonine 68, arginine 172, tyrosine 182, and arginine 219 each coordinate ATP. Threonine 67 is a Mg(2+) binding site. Positions 183-253 (TPAELRHVLQ…AAAMALARLE (71 aa)) are small ATPAse domain (RuvB-S). The tract at residues 256–346 (ESGLDSLDRR…QAQGALFDEG (91 aa)) is head domain (RuvB-H). Arginine 292, arginine 311, and arginine 316 together coordinate DNA.

It belongs to the RuvB family. As to quaternary structure, homohexamer. Forms an RuvA(8)-RuvB(12)-Holliday junction (HJ) complex. HJ DNA is sandwiched between 2 RuvA tetramers; dsDNA enters through RuvA and exits via RuvB. An RuvB hexamer assembles on each DNA strand where it exits the tetramer. Each RuvB hexamer is contacted by two RuvA subunits (via domain III) on 2 adjacent RuvB subunits; this complex drives branch migration. In the full resolvosome a probable DNA-RuvA(4)-RuvB(12)-RuvC(2) complex forms which resolves the HJ.

The protein localises to the cytoplasm. It carries out the reaction ATP + H2O = ADP + phosphate + H(+). The RuvA-RuvB-RuvC complex processes Holliday junction (HJ) DNA during genetic recombination and DNA repair, while the RuvA-RuvB complex plays an important role in the rescue of blocked DNA replication forks via replication fork reversal (RFR). RuvA specifically binds to HJ cruciform DNA, conferring on it an open structure. The RuvB hexamer acts as an ATP-dependent pump, pulling dsDNA into and through the RuvAB complex. RuvB forms 2 homohexamers on either side of HJ DNA bound by 1 or 2 RuvA tetramers; 4 subunits per hexamer contact DNA at a time. Coordinated motions by a converter formed by DNA-disengaged RuvB subunits stimulates ATP hydrolysis and nucleotide exchange. Immobilization of the converter enables RuvB to convert the ATP-contained energy into a lever motion, pulling 2 nucleotides of DNA out of the RuvA tetramer per ATP hydrolyzed, thus driving DNA branch migration. The RuvB motors rotate together with the DNA substrate, which together with the progressing nucleotide cycle form the mechanistic basis for DNA recombination by continuous HJ branch migration. Branch migration allows RuvC to scan DNA until it finds its consensus sequence, where it cleaves and resolves cruciform DNA. In Caulobacter vibrioides (strain ATCC 19089 / CIP 103742 / CB 15) (Caulobacter crescentus), this protein is Holliday junction branch migration complex subunit RuvB.